Here is a 599-residue protein sequence, read N- to C-terminus: UvrABC system protein C (599 aa).

Residues 19–95 form the GIY-YIG domain; the sequence is ESTGVYIFYD…IKKYRPIMNV (77 aa). A UVR domain is found at 206-241; it reads EEIIEKLYDQMQEYSKNLEFEKAAKIRDKIRLLQNL.

This sequence belongs to the UvrC family. As to quaternary structure, interacts with UvrB in an incision complex.

Its subcellular location is the cytoplasm. Its function is as follows. The UvrABC repair system catalyzes the recognition and processing of DNA lesions. UvrC both incises the 5' and 3' sides of the lesion. The N-terminal half is responsible for the 3' incision and the C-terminal half is responsible for the 5' incision. The polypeptide is UvrABC system protein C (Dictyoglomus thermophilum (strain ATCC 35947 / DSM 3960 / H-6-12)).